Consider the following 716-residue polypeptide: ATP-dependent zinc metalloprotease FTSH 1, chloroplastic (716 aa).

The transit peptide at 1-48 (MASNSLLRSSSNFFLGSHIIISSPTPKTTRKPSFPFSFVSRAKYQITR) directs the protein to the chloroplast. A thylakoid-targeting transit peptide spans 49–86 (SSQDENSPNGKPNSPFSSQVALAAILLSSISSSPLALA). A helical transmembrane segment spans residues 204–224 (FTVIGNLIFPLLAFGGLFLLF). ATP is bound at residue 302 to 309 (GPPGTGKT). H524 provides a ligand contact to Zn(2+). E525 is an active-site residue. The Zn(2+) site is built by H528 and D605.

The protein in the N-terminal section; belongs to the AAA ATPase family. In the C-terminal section; belongs to the peptidase M41 family. As to quaternary structure, interacts with CHIP and HSP70. Heterohexamers with FTSH2, FTSH5 and FTSH8. Zn(2+) is required as a cofactor. Post-translationally, the FTSH1 precursor is ubiquitinated by CHIP in the cytoplasm. Ubiquitous.

The protein localises to the plastid. The protein resides in the chloroplast thylakoid membrane. Part of a complex that function as an ATP-dependent zinc metallopeptidase. Involved in the thylakoid formation and in the removal of damaged D1 in the photosystem II, preventing cell death under high-intensity light conditions. The polypeptide is ATP-dependent zinc metalloprotease FTSH 1, chloroplastic (FTSH1) (Arabidopsis thaliana (Mouse-ear cress)).